We begin with the raw amino-acid sequence, 729 residues long: Fatty acid oxidation complex subunit alpha (729 aa).

The enoyl-CoA hydratase/isomerase stretch occupies residues 1–189 (MLYKGDTLYL…KIGLVDGVVK (189 aa)). Residue Asp-296 participates in substrate binding. Positions 311–729 (ETPKQAAVLG…ARPVGSLKTA (419 aa)) are 3-hydroxyacyl-CoA dehydrogenase. Residues Met-324, Asp-343, 400–402 (VVE), Lys-407, and Ser-429 each bind NAD(+). His-450 functions as the For 3-hydroxyacyl-CoA dehydrogenase activity in the catalytic mechanism. Asn-453 contributes to the NAD(+) binding site. Substrate contacts are provided by Asn-500 and Tyr-660. Residues 708-729 (RHNEPYYPPVEPARPVGSLKTA) are disordered.

The protein in the N-terminal section; belongs to the enoyl-CoA hydratase/isomerase family. This sequence in the C-terminal section; belongs to the 3-hydroxyacyl-CoA dehydrogenase family. In terms of assembly, heterotetramer of two alpha chains (FadB) and two beta chains (FadA).

The catalysed reaction is a (3S)-3-hydroxyacyl-CoA + NAD(+) = a 3-oxoacyl-CoA + NADH + H(+). It carries out the reaction a (3S)-3-hydroxyacyl-CoA = a (2E)-enoyl-CoA + H2O. The enzyme catalyses a 4-saturated-(3S)-3-hydroxyacyl-CoA = a (3E)-enoyl-CoA + H2O. It catalyses the reaction (3S)-3-hydroxybutanoyl-CoA = (3R)-3-hydroxybutanoyl-CoA. The catalysed reaction is a (3Z)-enoyl-CoA = a 4-saturated (2E)-enoyl-CoA. It carries out the reaction a (3E)-enoyl-CoA = a 4-saturated (2E)-enoyl-CoA. Its pathway is lipid metabolism; fatty acid beta-oxidation. Functionally, involved in the aerobic and anaerobic degradation of long-chain fatty acids via beta-oxidation cycle. Catalyzes the formation of 3-oxoacyl-CoA from enoyl-CoA via L-3-hydroxyacyl-CoA. It can also use D-3-hydroxyacyl-CoA and cis-3-enoyl-CoA as substrate. This is Fatty acid oxidation complex subunit alpha from Salmonella enteritidis PT4 (strain P125109).